Here is a 45-residue protein sequence, read N- to C-terminus: Large ribosomal subunit protein bL34 (45 aa).

The protein belongs to the bacterial ribosomal protein bL34 family.

This is Large ribosomal subunit protein bL34 (rpmH) from Streptomyces coelicolor (strain ATCC BAA-471 / A3(2) / M145).